Consider the following 189-residue polypeptide: dTTP/UTP pyrophosphatase (189 aa).

The Proton acceptor role is filled by Asp73.

This sequence belongs to the Maf family. YhdE subfamily. The cofactor is a divalent metal cation.

It is found in the cytoplasm. The catalysed reaction is dTTP + H2O = dTMP + diphosphate + H(+). It carries out the reaction UTP + H2O = UMP + diphosphate + H(+). Functionally, nucleoside triphosphate pyrophosphatase that hydrolyzes dTTP and UTP. May have a dual role in cell division arrest and in preventing the incorporation of modified nucleotides into cellular nucleic acids. The chain is dTTP/UTP pyrophosphatase from Vibrio parahaemolyticus serotype O3:K6 (strain RIMD 2210633).